The chain runs to 127 residues: Thioredoxin domain-containing protein 8 (127 aa).

The 126-residue stretch at 2–127 (VKRIKNMSEL…QLEKKIQELM (126 aa)) folds into the Thioredoxin domain. The cysteines at positions 32 and 35 are disulfide-linked.

It belongs to the thioredoxin family. Testis-specific. Only expressed during spermiogenesis, prominently in the Golgi apparatus of pachytene spermatocytes and round and elongated spermatids, with a transient localization in the developing acrosome of round spermatids (at protein level).

Its subcellular location is the cytoplasm. It localises to the golgi apparatus. May be required for post-translational modifications of proteins required for acrosomal biogenesis. May act by reducing disulfide bonds within the sperm. This is Thioredoxin domain-containing protein 8 (Txndc8) from Mus musculus (Mouse).